Here is a 587-residue protein sequence, read N- to C-terminus: Proline-rich protein 14 (587 aa).

An N-acetylmethionine modification is found at M1. Positions 1–11 are enriched in polar residues; that stretch reads MDLPGDSSTPG. Disordered regions lie at residues 1-48, 65-152, and 181-241; these read MDLP…EKAS, VPLE…HQPT, and ARRA…RPRL. The segment at 1-135 is sufficient for heterochromatin association in interphase and chromatin association in anaphase; that stretch reads MDLPGDSSTP…TPRRQSRTTP (135 aa). A required for the interaction with GRB2 and sufficient to promote the phosphorylation of AKT and cell proliferation region spans residues 85 to 378; it reads SVRSQPPASP…MAKAPPPPRP (294 aa). Residues 136 to 365 form a required for nuclear lamina association region; sequence GPDEGPSQKV…RPRPRRHTVG (230 aa). Low complexity predominate over residues 200 to 214; sequence LPAPSRPSALSANPL. Positions 215–234 are enriched in pro residues; the sequence is ASPPPAPDPVLEPPSTPPPS. S277 carries the phosphoserine modification. 2 disordered regions span residues 290–444 and 524–587; these read EAGQ…IGKV and FRDS…PHRT. The span at 314–325 shows a compositional bias: polar residues; it reads AQDQNPSATLTK. A compositionally biased stretch (pro residues) spans 337 to 356; it reads LGPPGPDPCSWPPVPAPSSR. Low complexity predominate over residues 398-410; that stretch reads TSCSSTASTSSFS. A required for nuclear localization region spans residues 519-536; the sequence is RRTVEFRDSSLPRSRRPS. Over residues 538–548 the composition is skewed to low complexity; sequence GARATAGRTLP. The segment covering 572–581 has biased composition (acidic residues); that stretch reads LLEEEEEGDQ.

As to quaternary structure, interacts (via proline-rich region) with GRB2 (via SH3 domain 2). Interacts (via N-terminus) with CBX5.

Its subcellular location is the chromosome. It localises to the nucleus. The protein localises to the nucleus lamina. The protein resides in the nucleoplasm. Functionally, functions in tethering peripheral heterochromatin to the nuclear lamina during interphase, possibly through the interaction with heterochromatin protein CBX5/HP1 alpha. Might play a role in reattaching heterochromatin to the nuclear lamina at mitotic exit. Promotes myoblast differentiation during skeletal myogenesis, possibly by stimulating transcription factor MyoD activity via binding to CBX5/HP1 alpha. Involved in the positive regulation of the PI3K-Akt-mTOR signaling pathway and in promoting cell proliferation, possibly via binding to GRB2. The sequence is that of Proline-rich protein 14 (PRR14) from Bos taurus (Bovine).